A 307-amino-acid chain; its full sequence is Low-salt glycan biosynthesis hexosyltransferase Agl10 (307 aa).

Belongs to the glycosyltransferase 2 family.

The protein operates within protein modification; protein glycosylation. Its pathway is cell surface structure biogenesis; S-layer biogenesis. In terms of biological role, hexosyltransferase involved in N-glycan biosynthetic pathway that takes place under low-salt conditions (1.75 M instead of 3.4 M). Participates in the formation of the tetrasaccharide present at 'Asn-532' of S-layer glycoprotein Csg, consisting of a sulfated hexose, 2 hexoses and rhamnose. Involved in the addition of final rhamnose (sugar 4) of the tetrasaccharide on the dolichol phosphate carrier. The protein is Low-salt glycan biosynthesis hexosyltransferase Agl10 (agl10) of Haloferax volcanii (strain ATCC 29605 / DSM 3757 / JCM 8879 / NBRC 14742 / NCIMB 2012 / VKM B-1768 / DS2) (Halobacterium volcanii).